Here is a 409-residue protein sequence, read N- to C-terminus: Mitochondrial inner membrane protein oxa1-2 (409 aa).

Residues 76–96 traverse the membrane as a helical segment; the sequence is VVYTPSLPLSSSVLASFSFLP. Residues 97–114 are Mitochondrial intermembrane-facing; that stretch reads HNILQNGLNTLHIWSGLP. Residues 115–135 traverse the membrane as a helical segment; that stretch reads WWASIAACAVAMRIAVFPIML. The Mitochondrial matrix portion of the chain corresponds to 136–188; the sequence is KMMKTSAKLAIINPKVAEHMSVLSKAKAEGNSELMMQATTQIQNLYKVNNVNP. The chain crosses the membrane as a helical span at residues 189 to 209; sequence LNLLSAPVFQGILFISFFYAL. The Mitochondrial intermembrane portion of the chain corresponds to 210 to 235; that stretch reads KTMAGVPVEGFTDGGFWWVNDLSQPD. A helical membrane pass occupies residues 236 to 256; the sequence is PLHIFPVANGLLMLLNIELGS. The Mitochondrial matrix segment spans residues 257–275; it reads ETGSNKVAMSPSMKKFFRF. Residues 276-296 traverse the membrane as a helical segment; that stretch reads LCLASPLFTMNFPMAIFMYWF. Topologically, residues 297–409 are mitochondrial intermembrane; sequence PSNVFSVFQG…SVTKPTEKKD (113 aa). Residues 369–409 are disordered; it reads TDTNNEQKPTNNSTITKATTLSDNSQNDKSSSVTKPTEKKD. A compositionally biased stretch (polar residues) spans 374–403; it reads EQKPTNNSTITKATTLSDNSQNDKSSSVTK.

This sequence belongs to the OXA1/ALB3/YidC family.

Its subcellular location is the mitochondrion inner membrane. Functionally, required for the insertion of integral membrane proteins into the mitochondrial inner membrane. Essential for the activity and assembly of cytochrome c oxidase. It is essential for viability while oxa101 is not. When both are deleted the cell is non-viable, suggesting that oxa101 act as a back-up for oxa102. This chain is Mitochondrial inner membrane protein oxa1-2 (oxa102), found in Schizosaccharomyces pombe (strain 972 / ATCC 24843) (Fission yeast).